We begin with the raw amino-acid sequence, 262 residues long: Pimeloyl-[acyl-carrier protein] methyl ester esterase (262 aa).

Residues 15-242 (HLVLLHGWGL…AAHAPFISHP (228 aa)) enclose the AB hydrolase-1 domain. Residues W22, 82 to 83 (SL), and 143 to 147 (FLALQ) contribute to the substrate site. S82 acts as the Nucleophile in catalysis. Catalysis depends on residues D207 and H235. A substrate-binding site is contributed by H235.

Belongs to the AB hydrolase superfamily. Carboxylesterase BioH family. As to quaternary structure, monomer.

The protein localises to the cytoplasm. The enzyme catalyses 6-carboxyhexanoyl-[ACP] methyl ester + H2O = 6-carboxyhexanoyl-[ACP] + methanol + H(+). It functions in the pathway cofactor biosynthesis; biotin biosynthesis. In terms of biological role, the physiological role of BioH is to remove the methyl group introduced by BioC when the pimeloyl moiety is complete. It allows to synthesize pimeloyl-ACP via the fatty acid synthetic pathway through the hydrolysis of the ester bonds of pimeloyl-ACP esters. The protein is Pimeloyl-[acyl-carrier protein] methyl ester esterase of Shigella flexneri.